Reading from the N-terminus, the 395-residue chain is Protein UNIFOLIATA (395 aa).

Disordered stretches follow at residues 147–170 and 185–223; these read SQEG…GGGS and QIRR…GERQ. Over residues 202–211 the composition is skewed to acidic residues; it reads EEGEEEEEDN. DNA-binding regions lie at residues 224–228, 293–300, and 364–367; these read REHPF, NKPKMRHY, and YGPT.

This sequence belongs to the FLO/LFY family. Highly expressed in leaf, leaflet, inflorescence and lateral shoot primordia on the main shoot axis, and in floral organ and carpel primordia.

The protein localises to the nucleus. May regulate indeterminacy during leaf and flower development. This chain is Protein UNIFOLIATA (UNI), found in Pisum sativum (Garden pea).